Here is a 247-residue protein sequence, read N- to C-terminus: Ribose-5-phosphate isomerase (247 aa).

This sequence belongs to the ribose 5-phosphate isomerase family.

It localises to the cytoplasm. It catalyses the reaction aldehydo-D-ribose 5-phosphate = D-ribulose 5-phosphate. It participates in carbohydrate degradation; pentose phosphate pathway; D-ribose 5-phosphate from D-ribulose 5-phosphate (non-oxidative stage): step 1/1. The chain is Ribose-5-phosphate isomerase (RKI1) from Meyerozyma guilliermondii (strain ATCC 6260 / CBS 566 / DSM 6381 / JCM 1539 / NBRC 10279 / NRRL Y-324) (Yeast).